The chain runs to 320 residues: Pyrroline-5-carboxylate reductase 2 (320 aa).

Serine 2 carries the N-acetylserine modification. Residues 6–11 (IGAGQL) and serine 34 each bind NADP(+). NADPH contacts are provided by alanine 8, glutamine 10, leucine 11, serine 34, glutamate 36, asparagine 56, valine 70, lysine 71, and alanine 97. Residues asparagine 56, 69–72 (AVKP), and 95–97 (CAA) each bind NADP(+). An L-proline-binding site is contributed by glutamate 164. Asparagine 230 provides a ligand contact to NADPH. L-proline is bound by residues alanine 237 and threonine 238. A compositionally biased stretch (low complexity) spans 295–305 (PTVSTLTPSSP). Residues 295–320 (PTVSTLTPSSPGKLLTRSLALGGKKD) form a disordered region. Serine 304 is subject to Phosphoserine.

Belongs to the pyrroline-5-carboxylate reductase family. Homodecamer; composed of 5 homodimers. Interacts with LTO1.

The protein localises to the cytoplasm. The protein resides in the mitochondrion. It carries out the reaction L-proline + NADP(+) = (S)-1-pyrroline-5-carboxylate + NADPH + 2 H(+). The enzyme catalyses L-proline + NAD(+) = (S)-1-pyrroline-5-carboxylate + NADH + 2 H(+). Its pathway is amino-acid biosynthesis; L-proline biosynthesis; L-proline from L-glutamate 5-semialdehyde: step 1/1. Its function is as follows. Oxidoreductase that catalyzes the last step in proline biosynthesis, which corresponds to the reduction of pyrroline-5-carboxylate to L-proline using NAD(P)H. At physiologic concentrations, has higher specific activity in the presence of NADH. Involved in cellular response to oxidative stress. In some cell types, such as erythrocytes, its primary function may be the generation of NADP(+). The chain is Pyrroline-5-carboxylate reductase 2 (PYCR2) from Macaca fascicularis (Crab-eating macaque).